We begin with the raw amino-acid sequence, 163 residues long: Ribonuclease P protein subunit p25-like protein (163 aa).

Disordered stretches follow at residues 1 to 22 (MEHYRKAGSVELPAPSPMPQLP) and 129 to 163 (NEYGYQPPGAPPDLGPTPASSCGPQPRRRARDTRF). The segment covering 154 to 163 (PRRRARDTRF) has biased composition (basic residues).

This sequence belongs to the histone-like Alba family.

The protein resides in the nucleus. Its function is as follows. May be a component of ribonuclease P or MRP. The protein is Ribonuclease P protein subunit p25-like protein (RPP25L) of Bos taurus (Bovine).